Consider the following 257-residue polypeptide: UPF0246 protein Daro_2893 (257 aa).

This sequence belongs to the UPF0246 family.

This chain is UPF0246 protein Daro_2893, found in Dechloromonas aromatica (strain RCB).